The following is a 146-amino-acid chain: 3-dehydroquinate dehydratase (146 aa).

The active-site Proton acceptor is Y22. Residues N73, H79, and D86 each coordinate substrate. The active-site Proton donor is the H99. Residues I100–S101 and R110 contribute to the substrate site.

This sequence belongs to the type-II 3-dehydroquinase family. In terms of assembly, homododecamer.

The catalysed reaction is 3-dehydroquinate = 3-dehydroshikimate + H2O. Its pathway is metabolic intermediate biosynthesis; chorismate biosynthesis; chorismate from D-erythrose 4-phosphate and phosphoenolpyruvate: step 3/7. Catalyzes a trans-dehydration via an enolate intermediate. This is 3-dehydroquinate dehydratase from Prochlorococcus marinus subsp. pastoris (strain CCMP1986 / NIES-2087 / MED4).